We begin with the raw amino-acid sequence, 231 residues long: Somatolactin-1 (231 aa).

The signal sequence occupies residues 1 to 24; the sequence is MRMIRAIKQGQWAVLLWPYLLTAS. Disulfide bonds link cysteine 29–cysteine 39, cysteine 89–cysteine 205, and cysteine 222–cysteine 230. Asparagine 145 carries an N-linked (GlcNAc...) asparagine glycan.

This sequence belongs to the somatotropin/prolactin family. In terms of tissue distribution, pituitary gland.

The protein localises to the secreted. The sequence is that of Somatolactin-1 from Sparus aurata (Gilthead sea bream).